The chain runs to 79 residues: Small ribosomal subunit protein uS17 (79 aa).

This sequence belongs to the universal ribosomal protein uS17 family. As to quaternary structure, part of the 30S ribosomal subunit.

In terms of biological role, one of the primary rRNA binding proteins, it binds specifically to the 5'-end of 16S ribosomal RNA. This Orientia tsutsugamushi (strain Ikeda) (Rickettsia tsutsugamushi) protein is Small ribosomal subunit protein uS17.